A 291-amino-acid chain; its full sequence is Succinate--CoA ligase [ADP-forming] subunit alpha 1 (291 aa).

CoA contacts are provided by residues threonine 20–glutamine 23, lysine 46, and valine 99–glutamate 101. Residue tyrosine 162 participates in substrate binding. Histidine 249 (tele-phosphohistidine intermediate) is an active-site residue.

The protein belongs to the succinate/malate CoA ligase alpha subunit family. In terms of assembly, heterotetramer of two alpha and two beta subunits.

The catalysed reaction is succinate + ATP + CoA = succinyl-CoA + ADP + phosphate. It catalyses the reaction GTP + succinate + CoA = succinyl-CoA + GDP + phosphate. The protein operates within carbohydrate metabolism; tricarboxylic acid cycle; succinate from succinyl-CoA (ligase route): step 1/1. Succinyl-CoA synthetase functions in the citric acid cycle (TCA), coupling the hydrolysis of succinyl-CoA to the synthesis of either ATP or GTP and thus represents the only step of substrate-level phosphorylation in the TCA. The alpha subunit of the enzyme binds the substrates coenzyme A and phosphate, while succinate binding and nucleotide specificity is provided by the beta subunit. This is Succinate--CoA ligase [ADP-forming] subunit alpha 1 from Archaeoglobus fulgidus (strain ATCC 49558 / DSM 4304 / JCM 9628 / NBRC 100126 / VC-16).